A 359-amino-acid chain; its full sequence is Probable dual-specificity RNA methyltransferase RlmN (359 aa).

Catalysis depends on glutamate 91, which acts as the Proton acceptor. The 233-residue stretch at 97-329 folds into the Radical SAM core domain; it reads QHYGHSVCVT…KKNGVNCVVR (233 aa). An intrachain disulfide couples cysteine 104 to cysteine 340. Residues cysteine 111, cysteine 115, and cysteine 118 each contribute to the [4Fe-4S] cluster site. S-adenosyl-L-methionine-binding positions include 163–164, serine 195, 218–220, and asparagine 296; these read GE and SLH. Residue cysteine 340 is the S-methylcysteine intermediate of the active site.

This sequence belongs to the radical SAM superfamily. RlmN family. The cofactor is [4Fe-4S] cluster.

The protein localises to the cytoplasm. It catalyses the reaction adenosine(2503) in 23S rRNA + 2 reduced [2Fe-2S]-[ferredoxin] + 2 S-adenosyl-L-methionine = 2-methyladenosine(2503) in 23S rRNA + 5'-deoxyadenosine + L-methionine + 2 oxidized [2Fe-2S]-[ferredoxin] + S-adenosyl-L-homocysteine. It carries out the reaction adenosine(37) in tRNA + 2 reduced [2Fe-2S]-[ferredoxin] + 2 S-adenosyl-L-methionine = 2-methyladenosine(37) in tRNA + 5'-deoxyadenosine + L-methionine + 2 oxidized [2Fe-2S]-[ferredoxin] + S-adenosyl-L-homocysteine. Specifically methylates position 2 of adenine 2503 in 23S rRNA and position 2 of adenine 37 in tRNAs. The protein is Probable dual-specificity RNA methyltransferase RlmN of Streptococcus pyogenes serotype M2 (strain MGAS10270).